The sequence spans 551 residues: TRAF3-interacting JNK-activating modulator (551 aa).

Over 1–526 (MISPDPRPSP…QLPPRRQCGR (526 aa)) the chain is Cytoplasmic. 2 disordered regions span residues 73 to 95 (LEEK…RPGQ) and 140 to 178 (DHLS…IKND). Coiled coils occupy residues 240–436 (DKLK…LLTK) and 464–506 (WDLR…RKLQ). The helical; Anchor for type IV membrane protein transmembrane segment at 527-544 (WLPVLMVVIAAALAVFLA) threads the bilayer. The Extracellular segment spans residues 545–551 (NKDNLMI).

As to quaternary structure, interacts (via its coiled-coil domain) with TRAF3 (via isoleucine zipper). Interacts with MAP2K1. Interacts with PPP2CA; this interaction targets PPP2CA to the lysosomes. Interacts with TLR4. Interacts with MAVS. Interacts with TBK1.

It localises to the cell membrane. Its subcellular location is the golgi apparatus membrane. The protein resides in the lysosome membrane. The protein localises to the mitochondrion outer membrane. Its function is as follows. Adapter protein that plays essential roles in both innate and adaptive immunity. Plays a crucial role in the regulation of thymocyte development. Mechanistically, mediates TCR-stimulated activation through recruiting MAP2K1/MEK1 to the Golgi and, thereby, facilitating the interaction of MAP2K1/MEK1 with its activator BRAF. Also plays an essential role in regulatory T-cell stability and function by recruiting the serine-threonine phosphatase catalytic subunit (PPP2CA) to the lysosome, thereby facilitating the interaction of PP2Ac with the mTORC1 component RPTOR and restricting glycolytic metabolism. Positively regulates TLR4 signaling activity in macrophage-mediated inflammation by acting as a molecular clamp to facilitate LPS-induced translocation of TLR4 to lipid rafts. In response to viral infection, facilitates the recruitment of TRAF3 to MAVS within mitochondria leading to IRF3 activation and interferon production. However, participates in the maintenance of immune homeostasis and the prevention of overzealous innate immunity by promoting 'Lys-48'-dependent ubiquitination of TBK1. The sequence is that of TRAF3-interacting JNK-activating modulator (TRAF3IP3) from Homo sapiens (Human).